The primary structure comprises 219 residues: Protein-L-isoaspartate O-methyltransferase 1 (219 aa).

Ser67 is a catalytic residue.

It belongs to the methyltransferase superfamily. L-isoaspartyl/D-aspartyl protein methyltransferase family.

The protein resides in the cytoplasm. It catalyses the reaction [protein]-L-isoaspartate + S-adenosyl-L-methionine = [protein]-L-isoaspartate alpha-methyl ester + S-adenosyl-L-homocysteine. Its function is as follows. Catalyzes the methyl esterification of L-isoaspartyl residues in peptides and proteins that result from spontaneous decomposition of normal L-aspartyl and L-asparaginyl residues. It plays a role in the repair and/or degradation of damaged proteins. The protein is Protein-L-isoaspartate O-methyltransferase 1 of Geotalea uraniireducens (strain Rf4) (Geobacter uraniireducens).